The chain runs to 297 residues: tRNA pseudouridine synthase B (297 aa).

The active-site Nucleophile is the aspartate 39.

This sequence belongs to the pseudouridine synthase TruB family. Type 1 subfamily.

The catalysed reaction is uridine(55) in tRNA = pseudouridine(55) in tRNA. Responsible for synthesis of pseudouridine from uracil-55 in the psi GC loop of transfer RNAs. This Lactobacillus gasseri (strain ATCC 33323 / DSM 20243 / BCRC 14619 / CIP 102991 / JCM 1131 / KCTC 3163 / NCIMB 11718 / NCTC 13722 / AM63) protein is tRNA pseudouridine synthase B.